We begin with the raw amino-acid sequence, 327 residues long: Cobalamin biosynthesis protein CobD (327 aa).

4 helical membrane-spanning segments follow: residues 61 to 78 (MWLTVGLVAACIFAGLVI), 80 to 102 (SILPHAGTAGAIVEVVIVAILLA), 160 to 182 (GIVAPAFWFLVGGLPGLFAYKLI), and 300 to 322 (AALVLFWSTMSLMTGLVIAASLV).

This sequence belongs to the CobD/CbiB family.

The protein localises to the cell membrane. The protein operates within cofactor biosynthesis; adenosylcobalamin biosynthesis. Its function is as follows. Converts cobyric acid to cobinamide by the addition of aminopropanol on the F carboxylic group. The chain is Cobalamin biosynthesis protein CobD from Brucella suis biovar 1 (strain 1330).